We begin with the raw amino-acid sequence, 520 residues long: 2-isopropylmalate synthase (520 aa).

In terms of domain architecture, Pyruvate carboxyltransferase spans 12–274; that stretch reads VLIFDTTLRD…TTGIDTTQIM (263 aa). 4 residues coordinate Mn(2+): Asp21, His209, His211, and Asn245. The regulatory domain stretch occupies residues 398–520; the sequence is RLLSLTVIAG…RLHAQHAAAE (123 aa).

It belongs to the alpha-IPM synthase/homocitrate synthase family. LeuA type 1 subfamily. In terms of assembly, homodimer. The cofactor is Mn(2+).

The protein localises to the cytoplasm. It carries out the reaction 3-methyl-2-oxobutanoate + acetyl-CoA + H2O = (2S)-2-isopropylmalate + CoA + H(+). It participates in amino-acid biosynthesis; L-leucine biosynthesis; L-leucine from 3-methyl-2-oxobutanoate: step 1/4. Its function is as follows. Catalyzes the condensation of the acetyl group of acetyl-CoA with 3-methyl-2-oxobutanoate (2-ketoisovalerate) to form 3-carboxy-3-hydroxy-4-methylpentanoate (2-isopropylmalate). The polypeptide is 2-isopropylmalate synthase (Methylobacterium nodulans (strain LMG 21967 / CNCM I-2342 / ORS 2060)).